We begin with the raw amino-acid sequence, 499 residues long: Probable dipeptidase B (499 aa).

Cys26 is an active-site residue.

The protein belongs to the peptidase C69 family.

The catalysed reaction is an L-aminoacyl-L-amino acid + H2O = 2 an L-alpha-amino acid. The polypeptide is Probable dipeptidase B (pepDB) (Streptococcus pyogenes serotype M18 (strain MGAS8232)).